Here is a 269-residue protein sequence, read N- to C-terminus: LOB domain-containing protein 6 (269 aa).

Positions 37 to 138 constitute an LOB domain; the sequence is SPCAACKFLR…QDLARAKFEL (102 aa).

It belongs to the LOB domain-containing protein family.

The protein resides in the nucleus. Its function is as follows. Negative regulator of cell proliferation in the adaxial side of leaves. Regulates the formation of a symmetric lamina and the establishment of venation. This Oryza sativa subsp. indica (Rice) protein is LOB domain-containing protein 6 (LBD6).